Here is an 878-residue protein sequence, read N- to C-terminus: Aconitase htyD (878 aa).

Substrate contacts are provided by residues glutamine 173 and aspartate 290–histidine 292. Residues cysteine 472, cysteine 535, and cysteine 538 each coordinate [4Fe-4S] cluster. Positions 558 and 563 each coordinate substrate. The segment at isoleucine 626–asparagine 671 is disordered. Serine 742 to arginine 743 provides a ligand contact to substrate.

The protein belongs to the aconitase/IPM isomerase family.

Its pathway is antifungal biosynthesis. Functionally, aconitase; part of the gene cluster that mediates the de novo generation of L-homotyrosine from acetyl-CoA and 4-hydroxyphenyl-pyruvate. L-homotyrosine is a building block of echinocandin B, a fungal lipidated cyclic hexapeptide that acts as an antifungal agent. L-homotyrosine 4-hydroxyphenyl-pyruvate first undergoes an aldol-type condensation by htyA with the C-2 of acetyl-CoA followed by the release of CoA to form 2-(4-hydroxybenzyl)-malate. This is followed by isomerization of 2-(4-hydroxy-benzyl)-malate to 3-(4-hydroxybenzyl)-malate by htyD. Thereafter, 3-(4-hydroxybenzyl)-malate undergoes decarboxylation and oxidation to form 2-oxo-4-(4-hydroxybenzyl)butanoic acid, coupled to reduction of NAD(+) to NADH by htyC. The product then undergoes transamination catalyzed by htyB to form L-homotyrosine. This chain is Aconitase htyD, found in Aspergillus rugulosus (Emericella rugulosa).